Consider the following 464-residue polypeptide: Sensor histidine kinase Hik34 (464 aa).

The 215-residue stretch at 235 to 449 (ALTHEVRTPL…ILTIYLKCEQ (215 aa)) folds into the Histidine kinase domain. At His238 the chain carries Phosphohistidine; by autocatalysis.

Post-translationally, when expressed in E.coli autophosphorylates at 18 to 30 degrees Celsius; less phosphorylation occurs at 36 and none occurs at 42 or 48 degrees Celsius.

It catalyses the reaction ATP + protein L-histidine = ADP + protein N-phospho-L-histidine.. Its function is as follows. Member of a two-component system Hik34/Rre1, controlling expression of at least 20 genes in response to hyperosmotic stress (0.5 M sorbitol) or salt (0.5 M NaCl). Represses expression of heat shock genes under normal growth conditions. Required for survival of long-term heat shock exposure. This is Sensor histidine kinase Hik34 from Synechocystis sp. (strain ATCC 27184 / PCC 6803 / Kazusa).